The chain runs to 436 residues: Hydroxycinnamoyltransferase (436 aa).

Catalysis depends on proton acceptor residues His154 and Asp383.

Belongs to the plant acyltransferase family. Mostly expressed in stems, and, to a lower extent, in bulbs.

Its pathway is phenylpropanoid metabolism. Its function is as follows. Hydroxycinnamoyl transferase that catalyzes the transfer of an acyl from p-coumaryol-CoA to various acyl acceptors. Can use feruloyl-CoA and caffeoyl-CoA as acyl donors. In Narcissus pseudonarcissus (Daffodil), this protein is Hydroxycinnamoyltransferase.